The following is a 498-amino-acid chain: Tyrosine 3-monooxygenase (498 aa).

Polar residues predominate over residues 1-10 (MPTPSASSPQ). The tract at residues 1 to 33 (MPTPSASSPQPKGFRRAVSEQDTKQAEAVTSPR) is disordered. Phosphoserine occurs at positions 19 and 31. Ser40 is modified (phosphoserine; by CaMK2 and PKA). 3 residues coordinate Fe cation: His331, His336, and Glu376. Ser472 is modified (phosphoserine).

This sequence belongs to the biopterin-dependent aromatic amino acid hydroxylase family. In terms of assembly, homotetramer. Interacts (when phosphorylated at Ser-19) with YWHAG; one YWHAG dimer bounds to one TH tetramer and this interaction may influence the phosphorylation and dephosphorylation of other sites. Interacts with NT5DC2; the interaction results in reduced phosphorylation and decreased catalytic activity of TH. Fe(2+) serves as cofactor. In terms of processing, phosphorylated on Ser-19, Ser-31 and Ser-40 by several protein kinases with different site specificities. Phosphorylation at Ser-31 and Ser-40 leads to an increase of TH activity. Phosphorylation at Ser-40 activates the enzyme and also counteracts the feedback inhibition of TH by catecholamines. Phosphorylation of Ser-19 and Ser-31 triggers the proteasomal degradation of TH through the ubiquitin-proteasome pathway. Phosphorylation at Ser-31 facilitates transport of TH from the soma to the nerve terminals via the microtubule network. Phosphorylation at Ser-19 induces the high-affinity binding to the 14-3-3 protein YWHAG; this interaction may influence the phosphorylation and dephosphorylation of other sites. Ser-19 increases the phosphorylation at Ser-40 in a hierarchical manner, leading to increased activity. Expressed in the adrenal gland. Expressed in the retina. Expressed in the in the striatum (at protein level).

Its subcellular location is the cytoplasm. The protein localises to the perinuclear region. The protein resides in the nucleus. It localises to the cell projection. It is found in the axon. Its subcellular location is the cytoplasmic vesicle. The protein localises to the secretory vesicle. The protein resides in the synaptic vesicle. It carries out the reaction (6R)-L-erythro-5,6,7,8-tetrahydrobiopterin + L-tyrosine + O2 = (4aS,6R)-4a-hydroxy-L-erythro-5,6,7,8-tetrahydrobiopterin + L-dopa. The protein operates within catecholamine biosynthesis; dopamine biosynthesis; dopamine from L-tyrosine: step 1/2. With respect to regulation, inhibited in feedback fashion by the catecholamine neurotransmitters, especially by dopamine in competition with tetrahydrobiopterin. Phosphorylation of several Ser/Thr residues in the N-terminus regulates the catalytic activity. Ser-31 and Ser-40 are readily phosphorylated to activate the catalytic activity. A Cysteine modification induced by N-ethylmaleimide (NEM), inhibits tyrosine 3-monooxygenase activity through the modification of the Cys-177. Functionally, catalyzes the conversion of L-tyrosine to L-dihydroxyphenylalanine (L-Dopa), the rate-limiting step in the biosynthesis of catecholamines, dopamine, noradrenaline, and adrenaline. Uses tetrahydrobiopterin and molecular oxygen to convert tyrosine to L-Dopa. In addition to tyrosine, is able to catalyze the hydroxylation of phenylalanine and tryptophan with lower specificity. Positively regulates the regression of retinal hyaloid vessels during postnatal development. This chain is Tyrosine 3-monooxygenase (Th), found in Mus musculus (Mouse).